A 434-amino-acid polypeptide reads, in one-letter code: Isocitrate lyase (434 aa).

Substrate is bound at residue 91 to 93 (SGW). Mg(2+) is bound at residue Asp157. The active-site Proton acceptor is Cys195. Residues 196-197 (GH), Arg232, 317-321 (NCSPS), and Thr351 contribute to the substrate site.

Belongs to the isocitrate lyase/PEP mutase superfamily. Isocitrate lyase family. Homotetramer. Requires Mg(2+) as cofactor.

The catalysed reaction is D-threo-isocitrate = glyoxylate + succinate. Its pathway is carbohydrate metabolism; glyoxylate cycle; (S)-malate from isocitrate: step 1/2. Involved in the metabolic adaptation in response to environmental changes. Catalyzes the reversible formation of succinate and glyoxylate from isocitrate, a key step of the glyoxylate cycle, which operates as an anaplerotic route for replenishing the tricarboxylic acid cycle during growth on fatty acid substrates. This Escherichia coli O6:H1 (strain CFT073 / ATCC 700928 / UPEC) protein is Isocitrate lyase (aceA).